The following is a 514-amino-acid chain: ATP synthase subunit alpha 2 (514 aa).

Residue 170–177 (GDRQTGKT) coordinates ATP.

Belongs to the ATPase alpha/beta chains family. F-type ATPases have 2 components, CF(1) - the catalytic core - and CF(0) - the membrane proton channel. CF(1) has five subunits: alpha(3), beta(3), gamma(1), delta(1), epsilon(1). CF(0) has three main subunits: a(1), b(2) and c(9-12). The alpha and beta chains form an alternating ring which encloses part of the gamma chain. CF(1) is attached to CF(0) by a central stalk formed by the gamma and epsilon chains, while a peripheral stalk is formed by the delta and b chains.

The protein localises to the cell inner membrane. The enzyme catalyses ATP + H2O + 4 H(+)(in) = ADP + phosphate + 5 H(+)(out). Produces ATP from ADP in the presence of a proton gradient across the membrane. The alpha chain is a regulatory subunit. The chain is ATP synthase subunit alpha 2 from Hahella chejuensis (strain KCTC 2396).